The sequence spans 555 residues: MSTDESEDVYSDLYSIISQVTSNTANDIEQLPYALTFKTSLIFVGATIGGLLFGYDTGVISGVLLSLKPEDLSLVVLTDVQKELITSSTSVGSFFGSILAFPLADRYGRRITLAICCSIFILAAIGMAIARTLTFLICGRLLVGIAVGVSAQCVPLFLSEISPSRIRGFMLTLNIIAITGGQLVSYVIASLMKEIDNSWRYLFALSAIPAILFLSILDFIPESPRWSISKGDILYTRDSLRMLYPTASTYHVNSKIKQLIIELDKLRLYEDASEPLLVQSQSVIRYMDSSTSGTLSPPNIKRLSSNTERTSNTMSSSSAYLSALRGPAPNGALASNKKKRHRMEPRTIRALIVGCMLMFFQQITGFNAFMYYAAIIFSKFNIKNPLLPPILIASTNFIFTFFAMYTMDSLGRRAILLRTILIMTVGLLLCSVGFGHDQVNLLLISVVIYVAAYASAMGSVPWTCVEFLPLNRRSFGASCIACTNWLTNAFVSMTYLSTINTIGDENTMLIFAFFTVCAWFFVYFWYPEVKGLSLEEVGRVFDNGIDVHYVFRTYH.

The Cytoplasmic portion of the chain corresponds to 1–39 (MSTDESEDVYSDLYSIISQVTSNTANDIEQLPYALTFKT). The chain crosses the membrane as a helical span at residues 40-60 (SLIFVGATIGGLLFGYDTGVI). Residues 61 to 83 (SGVLLSLKPEDLSLVVLTDVQKE) are Extracellular-facing. The helical transmembrane segment at 84 to 104 (LITSSTSVGSFFGSILAFPLA) threads the bilayer. The Cytoplasmic segment spans residues 105–118 (DRYGRRITLAICCS). Residues 119–139 (IFILAAIGMAIARTLTFLICG) traverse the membrane as a helical segment. Position 140 (Arg140) is a topological domain, extracellular. The helical transmembrane segment at 141–161 (LLVGIAVGVSAQCVPLFLSEI) threads the bilayer. Topologically, residues 162-168 (SPSRIRG) are cytoplasmic. A helical transmembrane segment spans residues 169–189 (FMLTLNIIAITGGQLVSYVIA). The Extracellular segment spans residues 190-200 (SLMKEIDNSWR). A helical transmembrane segment spans residues 201 to 221 (YLFALSAIPAILFLSILDFIP). Topologically, residues 222–356 (ESPRWSISKG…TIRALIVGCM (135 aa)) are cytoplasmic. The disordered stretch occupies residues 289-313 (SSTSGTLSPPNIKRLSSNTERTSNT). Residues 357-377 (LMFFQQITGFNAFMYYAAIIF) form a helical membrane-spanning segment. Over 378-384 (SKFNIKN) the chain is Extracellular. The helical transmembrane segment at 385 to 405 (PLLPPILIASTNFIFTFFAMY) threads the bilayer. Topologically, residues 406-413 (TMDSLGRR) are cytoplasmic. A helical membrane pass occupies residues 414–434 (AILLRTILIMTVGLLLCSVGF). The Extracellular segment spans residues 435 to 440 (GHDQVN). A helical transmembrane segment spans residues 441-461 (LLLISVVIYVAAYASAMGSVP). Topologically, residues 462-474 (WTCVEFLPLNRRS) are cytoplasmic. A helical transmembrane segment spans residues 475 to 497 (FGASCIACTNWLTNAFVSMTYLS). Residues 498–506 (TINTIGDEN) are Extracellular-facing. A helical transmembrane segment spans residues 507 to 527 (TMLIFAFFTVCAWFFVYFWYP). The Cytoplasmic segment spans residues 528-555 (EVKGLSLEEVGRVFDNGIDVHYVFRTYH).

This sequence belongs to the major facilitator superfamily. Sugar transporter (TC 2.A.1.1) family.

It localises to the membrane. The protein is Probable metabolite transport protein YDR387C of Saccharomyces cerevisiae (strain ATCC 204508 / S288c) (Baker's yeast).